Reading from the N-terminus, the 96-residue chain is Small ribosomal subunit protein bS18c (96 aa).

This sequence belongs to the bacterial ribosomal protein bS18 family. As to quaternary structure, part of the 30S ribosomal subunit.

The protein resides in the plastid. The protein localises to the chloroplast. This Pinus thunbergii (Japanese black pine) protein is Small ribosomal subunit protein bS18c (rps18).